Consider the following 340-residue polypeptide: Probable serine acetyltransferase 5 (340 aa).

Composition is skewed to low complexity over residues Met-1 to Ala-17 and Pro-54 to Pro-64. The interval Met-1–Glu-67 is disordered.

It belongs to the transferase hexapeptide repeat family. As to quaternary structure, homomultimer.

It carries out the reaction L-serine + acetyl-CoA = O-acetyl-L-serine + CoA. It functions in the pathway amino-acid biosynthesis; L-cysteine biosynthesis; L-cysteine from L-serine: step 1/2. This Oryza sativa subsp. japonica (Rice) protein is Probable serine acetyltransferase 5 (SAT5).